A 432-amino-acid chain; its full sequence is Adenylosuccinate synthetase (432 aa).

GTP contacts are provided by residues 13–19 (GDEGKGK) and 41–43 (GHT). The active-site Proton acceptor is aspartate 14. 2 residues coordinate Mg(2+): aspartate 14 and glycine 41. Residues 14 to 17 (DEGK), 39 to 42 (NAGH), threonine 130, arginine 144, glutamine 225, threonine 240, and arginine 304 each bind IMP. Residue histidine 42 is the Proton donor of the active site. 300–306 (ATTGRRR) contacts substrate. GTP is bound by residues arginine 306, 332–334 (KLD), and 415–417 (STG).

This sequence belongs to the adenylosuccinate synthetase family. Homodimer. It depends on Mg(2+) as a cofactor.

It localises to the cytoplasm. The enzyme catalyses IMP + L-aspartate + GTP = N(6)-(1,2-dicarboxyethyl)-AMP + GDP + phosphate + 2 H(+). Its pathway is purine metabolism; AMP biosynthesis via de novo pathway; AMP from IMP: step 1/2. Functionally, plays an important role in the de novo pathway of purine nucleotide biosynthesis. Catalyzes the first committed step in the biosynthesis of AMP from IMP. This is Adenylosuccinate synthetase from Cronobacter sakazakii (strain ATCC BAA-894) (Enterobacter sakazakii).